The sequence spans 429 residues: Ribosomal RNA small subunit methyltransferase B (429 aa).

S-adenosyl-L-methionine contacts are provided by residues 254–260, Asp-277, Asp-303, and Asp-322; that span reads CAAPGGK. The active-site Nucleophile is Cys-375.

The protein belongs to the class I-like SAM-binding methyltransferase superfamily. RsmB/NOP family.

The protein resides in the cytoplasm. It carries out the reaction cytidine(967) in 16S rRNA + S-adenosyl-L-methionine = 5-methylcytidine(967) in 16S rRNA + S-adenosyl-L-homocysteine + H(+). Functionally, specifically methylates the cytosine at position 967 (m5C967) of 16S rRNA. The polypeptide is Ribosomal RNA small subunit methyltransferase B (Escherichia coli O157:H7).